Reading from the N-terminus, the 457-residue chain is MDHLPIFCQLRDRDCLIVGGGDVAERKARLLLDAGARLTVNALAFIPQFTAWADAGMLTLVEGPFDESLLDTCWLAIAATDDDALNQRVSEAAEARRIFCNVVDAPKAASFIMPSIIDRSPLMVAVSSGGTSPVLARLLREKLESLLPLHLGQVAKYAGQLRGRVKQQFATMGERRRFWEKLFVNDRLAQSLANNDQKAITETTEQLINEPLDHRGEVVLVGAGPGDAGLLTLKGLQQIQQADVVVYDRLVSDDIMNLVRRDADRVFVGKRAGYHCVPQEEINQILLREAQKGKRVVRLKGGDPFIFGRGGEELETLCNAGIPFSVVPGITAASGCSAYSGIPLTHRDYAQSVRLITGHLKTGGELDWENLAAEKQTLVFYMGLNQAATIQQKLIEHGMPGEMPVAIVENGTAVTQRVIDGTLTQLGELAQQMNSPSLIIIGRVVGLRDKLNWFSNH.

The segment at 1 to 204 (MDHLPIFCQL…NDQKAITETT (204 aa)) is precorrin-2 dehydrogenase /sirohydrochlorin ferrochelatase. NAD(+) is bound by residues 22–23 (DV) and 43–44 (LA). Phosphoserine is present on Ser128. Residues 216–457 (GEVVLVGAGP…RDKLNWFSNH (242 aa)) are uroporphyrinogen-III C-methyltransferase. Pro225 contacts S-adenosyl-L-methionine. Asp248 serves as the catalytic Proton acceptor. Lys270 functions as the Proton donor in the catalytic mechanism. S-adenosyl-L-methionine contacts are provided by residues 301–303 (GGD), Ile306, 331–332 (TA), Met382, and Gly411.

In the N-terminal section; belongs to the precorrin-2 dehydrogenase / sirohydrochlorin ferrochelatase family. The protein in the C-terminal section; belongs to the precorrin methyltransferase family.

It carries out the reaction uroporphyrinogen III + 2 S-adenosyl-L-methionine = precorrin-2 + 2 S-adenosyl-L-homocysteine + H(+). It catalyses the reaction precorrin-2 + NAD(+) = sirohydrochlorin + NADH + 2 H(+). The catalysed reaction is siroheme + 2 H(+) = sirohydrochlorin + Fe(2+). The protein operates within cofactor biosynthesis; adenosylcobalamin biosynthesis; precorrin-2 from uroporphyrinogen III: step 1/1. It participates in cofactor biosynthesis; adenosylcobalamin biosynthesis; sirohydrochlorin from precorrin-2: step 1/1. Its pathway is porphyrin-containing compound metabolism; siroheme biosynthesis; precorrin-2 from uroporphyrinogen III: step 1/1. It functions in the pathway porphyrin-containing compound metabolism; siroheme biosynthesis; siroheme from sirohydrochlorin: step 1/1. The protein operates within porphyrin-containing compound metabolism; siroheme biosynthesis; sirohydrochlorin from precorrin-2: step 1/1. Multifunctional enzyme that catalyzes the SAM-dependent methylations of uroporphyrinogen III at position C-2 and C-7 to form precorrin-2 via precorrin-1. Then it catalyzes the NAD-dependent ring dehydrogenation of precorrin-2 to yield sirohydrochlorin. Finally, it catalyzes the ferrochelation of sirohydrochlorin to yield siroheme. The sequence is that of Siroheme synthase from Escherichia coli (strain 55989 / EAEC).